A 182-amino-acid chain; its full sequence is Transcription termination/antitermination protein NusG (182 aa).

Residues 131–163 (VGEQVRIKSGPFANQVGEVQEIEADKFKLTVLV) enclose the KOW domain.

It belongs to the NusG family.

In terms of biological role, participates in transcription elongation, termination and antitermination. This Staphylococcus carnosus (strain TM300) protein is Transcription termination/antitermination protein NusG.